We begin with the raw amino-acid sequence, 185 residues long: Large ribosomal subunit protein uL16m (185 aa).

It belongs to the universal ribosomal protein uL16 family.

It localises to the mitochondrion. In Zea mays (Maize), this protein is Large ribosomal subunit protein uL16m (RPL16).